Consider the following 274-residue polypeptide: Large ribosomal subunit protein uL2 (274 aa).

Residues 223–257 form a disordered region; it reads VAMNPVDHPHGGGEGRTSGGRHPVTPWGIPTKGYK.

The protein belongs to the universal ribosomal protein uL2 family. As to quaternary structure, part of the 50S ribosomal subunit. Forms a bridge to the 30S subunit in the 70S ribosome.

Its function is as follows. One of the primary rRNA binding proteins. Required for association of the 30S and 50S subunits to form the 70S ribosome, for tRNA binding and peptide bond formation. It has been suggested to have peptidyltransferase activity; this is somewhat controversial. Makes several contacts with the 16S rRNA in the 70S ribosome. The protein is Large ribosomal subunit protein uL2 of Geobacter sulfurreducens (strain ATCC 51573 / DSM 12127 / PCA).